The primary structure comprises 577 residues: MFS-type transporter pgmG (577 aa).

The disordered stretch occupies residues 1-32 (MSETVTQTETDQRPATARSLGAEEKEAKSDEQ). Residues 21–31 (GAEEKEAKSDE) show a composition bias toward basic and acidic residues. 8 consecutive transmembrane segments (helical) span residues 45-65 (FIVIISILSSVTLYSLDNTIV), 84-104 (WLSVAFLVACVATNSIWSKIY), 111-131 (WLYLFCVVLFEVGSAMCGAAP), 141-161 (ALAGLGGAGLYVGVMTLLSVN), 174-194 (TGLTWGVGTVLGPIVGGGFAV), 218-238 (PLTVPPVFFAAVAIPIYLFML), 259-279 (LGTILMIGACVSGVMAINFGG), and 292-312 (CFVVSGVLFIVFGLQQWYCIG). N-linked (GlcNAc...) asparagine glycosylation is present at Asn317. The helical transmembrane segment at 330–350 (FIILFVQTASVATVFFVPIYF) threads the bilayer. Asn360 carries N-linked (GlcNAc...) asparagine glycosylation. The next 5 helical transmembrane spans lie at 363–383 (AIDAGVRLLPLVCFIVAAMIL), 395–415 (MPWYLVGGCLSLVGSVLMYTI), 426–446 (GYMIILGVGGGMYAQASFAVA), 457–477 (VATGFISLAQLTGGTIALAIA), and 532–552 (ISQVYILPITGAAMSISLAIF).

This sequence belongs to the major facilitator superfamily. TCR/Tet family.

It localises to the membrane. MFS-type transporter; part of the gene cluster that mediates the biosynthesis of pleosporalin A, ascomycone A, as well as a third cryptic naphthoquinone derived pigment, all responsible for the coloration of conidia. Seems not to be involved in pigment biosynthesis although its expression is regulated by the cluster-specific transcription factor pgmR. This is MFS-type transporter pgmG from Aspergillus terreus (strain NIH 2624 / FGSC A1156).